Reading from the N-terminus, the 94-residue chain is MAVLTDEQIDAALPDLDGWERADGALRRSIKFPSFLDGIDAVRRVAEHAESKDHHPDIDIRWRTVTFALVTHSEGGITQNDVDMARDINGIVGS.

It belongs to the pterin-4-alpha-carbinolamine dehydratase family.

It carries out the reaction (4aS,6R)-4a-hydroxy-L-erythro-5,6,7,8-tetrahydrobiopterin = (6R)-L-erythro-6,7-dihydrobiopterin + H2O. The protein is Putative pterin-4-alpha-carbinolamine dehydratase of Mycobacterium avium (strain 104).